A 328-amino-acid chain; its full sequence is Malate dehydrogenase (328 aa).

NAD(+) is bound at residue 11-17; it reads GAAGQIG. R94 and R100 together coordinate substrate. Residues N107, Q114, and 131–133 contribute to the NAD(+) site; that span reads VGN. N133 and R164 together coordinate substrate. H189 (proton acceptor) is an active-site residue.

The protein belongs to the LDH/MDH superfamily. MDH type 2 family.

It catalyses the reaction (S)-malate + NAD(+) = oxaloacetate + NADH + H(+). In terms of biological role, catalyzes the reversible oxidation of malate to oxaloacetate. The polypeptide is Malate dehydrogenase (Acinetobacter baylyi (strain ATCC 33305 / BD413 / ADP1)).